The following is a 963-amino-acid chain: Importin-13 (963 aa).

HEAT repeat units follow at residues 24–54 (ENVEKALHQLYYDPNIENKNLAQKWLMQAQA), 56–88 (PQAWHFSWQLLQPDKVPEIQYFGASALHIKISR), 95–135 (TDQY…LSMM), 142–179 (AVADMVRLFQAEDSPVDSQGRCLALLELLTVLPEEFQT), 194–231 (LAVECGAVFPLLEQLLQQPSSPSCVRQKVLKCFSSWVQ), 236–268 (LQDCEALIQAAFAALQDSELFDSSVEAIVNAIS), 276–325 (VNTL…ALLD), 330–372 (WQSF…DDIL), 375–438 (EAEK…YEML), 440–476 (AELLSNLYDKLGRLLTSSEEPYSWQHTEALLYGFQSI), 487–522 (VVPGLIGLIPRISISNVQLADTVMFTIGALSEWLAD), 524–558 (PVMINSVLPLVLHALGNPELSISSVSTLKKICREC), 562–600 (LPPYAANIVAVSQDVLMKQIHKTSQCMWLMQALGFLLSA), 603–648 (VEEI…SNLF), 676–716 (PVVV…VKTL), 720–754 (FAPMVPQLCEMLGRMYSTIPQASALDLTRQLVHIF), 761–803 (FPPI…ALKR), 815–845 (VKAVFQCAVLALKFPEAPTVKASCGFFTELL), 860–893 (EDGRMLLIAVLEAIGGQASRSLMDCFADILFALN), and 897–931 (FSLLSVWIKEALQAPGFPSARLSPEQKDTFSQQIL). One can recognise an Importin N-terminal domain in the interval 45–111 (AQKWLMQAQA…KAQLFTQITR (67 aa)).

It belongs to the importin beta family. In terms of assembly, interacts with UBC9, RAN, RBM8A, eIF-1A and PAX6.

The protein resides in the cytoplasm. The protein localises to the nucleus. In terms of biological role, functions in nuclear protein import as nuclear transport receptor. Serves as receptor for nuclear localization signals (NLS) in cargo substrates. Is thought to mediate docking of the importin/substrate complex to the nuclear pore complex (NPC) through binding to nucleoporin and the complex is subsequently translocated through the pore by an energy requiring, Ran-dependent mechanism. At the nucleoplasmic side of the NPC, Ran binds to the importin, the importin/substrate complex dissociates and importin is re-exported from the nucleus to the cytoplasm where GTP hydrolysis releases Ran. The directionality of nuclear import is thought to be conferred by an asymmetric distribution of the GTP- and GDP-bound forms of Ran between the cytoplasm and nucleus. Mediates the nuclear import of UBC9, the RBM8A/MAGOH complex, PAX6 and probably other members of the paired homeobox family. Also mediates nuclear export of eIF-1A, and the cytoplasmic release of eIF-1A is triggered by the loading of import substrates onto IPO13. This is Importin-13 (IPO13) from Bos taurus (Bovine).